The sequence spans 120 residues: Large ribosomal subunit protein bL19c (120 aa).

It belongs to the bacterial ribosomal protein bL19 family.

The protein resides in the plastid. Its subcellular location is the chloroplast. The polypeptide is Large ribosomal subunit protein bL19c (rpl19) (Trieres chinensis (Marine centric diatom)).